An 825-amino-acid polypeptide reads, in one-letter code: Hypoxia-inducible factor 1-alpha (825 aa).

The segment at 1 to 30 (MEGAGGENEKKKMSSERRKEKSRDAARSRR) is disordered. The segment at 1–401 (MEGAGGENEK…KEPDALTLLA (401 aa)) is interaction with TSGA10. Positions 7–30 (ENEKKKMSSERRKEKSRDAARSRR) are enriched in basic and acidic residues. A bHLH domain is found at 17 to 70 (RRKEKSRDAARSRRSKESEVFYELAHQLPLPHNVSSHLDKASVMRLTISYLRVR). The DNA-binding stretch occupies residues 21 to 30 (KSRDAARSRR). Residues 85 to 158 (KAQMNCFYLK…THRNGPVRKG (74 aa)) form the PAS 1 domain. Residues 170–191 (RMKCTLTSRGRTMNIKSATWKV) are required for heterodimer formation with ARNT. Residues 228 to 298 (PHPSNIEIPL…KTHHDMFTKG (71 aa)) form the PAS 2 domain. S247 bears the Phosphoserine; by CK1 mark. Residues 302 to 345 (TGQYRMLAKRGGYVWVETQATVIYNTKDSQPQCIVCVNYVVSGI) enclose the PAC domain. The interval 401-602 (APAAGDTIIS…STVTGFQQTQ (202 aa)) is ODD. P402 is modified (4-hydroxyproline). Positions 492–516 (QIQDQPASPSDGSTRQSSPEPNSPS) are enriched in polar residues. The segment at 492–520 (QIQDQPASPSDGSTRQSSPEPNSPSEYCF) is disordered. Residues 530 to 574 (FKLELVEKLFAEDTEAKNPFSAQDTDLDLEMLAPYIPMDDDFQLR) are NTAD. K531 carries the N6-acetyllysine; alternate modification. A Glycyl lysine isopeptide (Lys-Gly) (interchain with G-Cter in ubiquitin); alternate cross-link involves residue K531. Glycyl lysine isopeptide (Lys-Gly) (interchain with G-Cter in ubiquitin) cross-links involve residues K537 and K546. Phosphoserine; by GSK3-beta is present on S550. A Phosphothreonine; by GSK3-beta modification is found at T554. The residue at position 563 (P563) is a 4-hydroxyproline. S575 carries the phosphoserine; by PLK3 modification. Residues 575 to 784 (SFDQLSPLES…SDLACRLLGQ (210 aa)) form an ID region. 2 disordered regions span residues 579–602 (LSPLESNSPSPPSVSTVTGFQQTQ) and 654–674 (AKASAYSGTHSRTASPDRAGK). Phosphoserine; by GSK3-beta is present on S588. Residues 654–667 (AKASAYSGTHSRTA) are compositionally biased toward polar residues. S657 is modified (phosphoserine; by PLK3). The short motif at 717–721 (RKRKM) is the Nuclear localization signal element. The tract at residues 785-825 (SMDESGLPQLTSYDCEVNAPIQGSRNLLQGEELLRALDQVN) is CTAD. C799 bears the S-nitrosocysteine mark. (3S)-3-hydroxyasparagine is present on N802.

Interacts with the ARNT; forms a heterodimer that binds core DNA sequence 5'-TACGTG-3' within the hypoxia response element (HRE) of target gene promoters. Interacts with COPS5; the interaction increases the transcriptional activity of HIF1A through increased stability. Interacts with EP300 (via TAZ-type 1 domains); the interaction is stimulated in response to hypoxia and inhibited by CITED2. Interacts with CREBBP (via TAZ-type 1 domains). Interacts with NCOA1, NCOA2, APEX1 and HSP90. Interacts (hydroxylated within the ODD domain) with VHLL (via beta domain); the interaction, leads to polyubiquitination and subsequent HIF1A proteasomal degradation. During hypoxia, sumoylated HIF1A also binds VHL; the interaction promotes the ubiquitination of HIF1A. Interacts with SENP1; the interaction desumoylates HIF1A resulting in stabilization and activation of transcription. Interacts (via the ODD domain) with NAA10; the interaction appears not to acetylate HIF1A nor have any affect on protein stability, during hypoxia. Interacts with RWDD3; the interaction enhances HIF1A sumoylation. Interacts with TSGA10. Interacts with HIF3A. Interacts with RORA (via the DNA binding domain); the interaction enhances HIF1A transcription under hypoxia through increasing protein stability. Interaction with PSMA7 inhibits the transactivation activity of HIF1A under both normoxic and hypoxia-mimicking conditions. Interacts with USP20. Interacts with RACK1; promotes HIF1A ubiquitination and proteasome-mediated degradation. Interacts (via N-terminus) with USP19. Interacts with SIRT2. Interacts (deacetylated form) with EGLN1. Interacts with CBFA2T3. Interacts with HSP90AA1 and HSP90AB1. Interacts with DCUN1D1; this interaction increases the interaction between VHL and DCUN1D1. Interacts with HIF1AN. Post-translationally, S-nitrosylation of Cys-799 may be responsible for increased recruitment of p300 coactivator necessary for transcriptional activity of HIF-1 complex. Acetylation of Lys-531 by ARD1 increases interaction with VHL and stimulates subsequent proteasomal degradation. Deacetylated by SIRT2 increases its interaction with and hydroxylation by EGLN1 thereby inactivating HIF1A activity by inducing its proteasomal degradation. In terms of processing, ubiquitinated; in normoxia, following hydroxylation and interaction with VHL. Lys-531 appears to be the principal site of ubiquitination. Clioquinol, the Cu/Zn-chelator, inhibits ubiquitination through preventing hydroxylation at Asn-802. Ubiquitinated by E3 ligase VHL. Deubiquitinated by UCHL1. Post-translationally, requires phosphorylation for DNA-binding. Phosphorylation at Ser-247 by CSNK1D/CK1 represses kinase activity and impairs ARNT binding. Phosphorylation by GSK3-beta and PLK3 promote degradation by the proteasome. The iron and 2-oxoglutarate dependent 3-hydroxylation of asparagine is (S) stereospecific within HIF CTAD domains. In terms of processing, sumoylated; with SUMO1 under hypoxia. Sumoylation is enhanced through interaction with RWDD3. Both sumoylation and desumoylation seem to be involved in the regulation of its stability during hypoxia. Sumoylation can promote either its stabilization or its VHL-dependent degradation by promoting hydroxyproline-independent HIF1A-VHL complex binding, thus leading to HIF1A ubiquitination and proteasomal degradation. Desumoylation by SENP1 increases its stability amd transcriptional activity. There is a disaccord between various publications on the effect of sumoylation and desumoylation on its stability and transcriptional activity. Post-translationally, in normoxia, is hydroxylated on Pro-402 and Pro-563 in the oxygen-dependent degradation domain (ODD) by EGLN1/PHD2 and EGLN2/PHD1. EGLN3/PHD3 has also been shown to hydroxylate Pro-563. The hydroxylated prolines promote interaction with VHL, initiating rapid ubiquitination and subsequent proteasomal degradation. Deubiquitinated by USP20. Under hypoxia, proline hydroxylation is impaired and ubiquitination is attenuated, resulting in stabilization. In normoxia, is hydroxylated on Asn-802 by HIF1AN, thus abrogating interaction with CREBBP and EP300 and preventing transcriptional activation. Repressed by iron ion, via Fe(2+) prolyl hydroxylase (PHD) enzymes-mediated hydroxylation and subsequent proteasomal degradation. As to expression, expressed in the kidney, higher expression is seen in the renal medulla than in the cortex. Expressed also in the perivenous zone of the liver.

Its subcellular location is the cytoplasm. It is found in the nucleus. It localises to the nucleus speckle. With respect to regulation, induced by reactive oxygen species (ROS). Functionally, functions as a master transcriptional regulator of the adaptive response to hypoxia. Under hypoxic conditions, activates the transcription of over 40 genes, including erythropoietin, glucose transporters, glycolytic enzymes, vascular endothelial growth factor, HILPDA, and other genes whose protein products increase oxygen delivery or facilitate metabolic adaptation to hypoxia. Plays an essential role in embryonic vascularization, tumor angiogenesis and pathophysiology of ischemic disease. Heterodimerizes with ARNT; heterodimer binds to core DNA sequence 5'-TACGTG-3' within the hypoxia response element (HRE) of target gene promoters. Activation requires recruitment of transcriptional coactivators such as CREBBP and EP300. Activity is enhanced by interaction with NCOA1 and/or NCOA2. Interaction with redox regulatory protein APEX1 seems to activate CTAD and potentiates activation by NCOA1 and CREBBP. Involved in the axonal distribution and transport of mitochondria in neurons during hypoxia. This chain is Hypoxia-inducible factor 1-alpha (Hif1a), found in Rattus norvegicus (Rat).